The primary structure comprises 881 residues: Probable inorganic carbon transporter subunit DabA (881 aa).

Zn(2+) contacts are provided by Cys399, Asp401, His585, and Cys600.

The protein belongs to the inorganic carbon transporter (TC 9.A.2) DabA family. In terms of assembly, forms a complex with DabB. Requires Zn(2+) as cofactor.

It is found in the cell membrane. In terms of biological role, part of an energy-coupled inorganic carbon pump. In Geobacillus sp. (strain WCH70), this protein is Probable inorganic carbon transporter subunit DabA.